Reading from the N-terminus, the 413-residue chain is Putative competence-damage inducible protein (413 aa).

Belongs to the CinA family.

The sequence is that of Putative competence-damage inducible protein from Thermoanaerobacter pseudethanolicus (strain ATCC 33223 / 39E) (Clostridium thermohydrosulfuricum).